Reading from the N-terminus, the 117-residue chain is Iron-sulfur cluster insertion protein ErpA (117 aa).

Iron-sulfur cluster is bound by residues cysteine 45, cysteine 109, and cysteine 111.

It belongs to the HesB/IscA family. As to quaternary structure, homodimer. It depends on iron-sulfur cluster as a cofactor.

Its function is as follows. Required for insertion of 4Fe-4S clusters for at least IspG. The sequence is that of Iron-sulfur cluster insertion protein ErpA from Saccharophagus degradans (strain 2-40 / ATCC 43961 / DSM 17024).